We begin with the raw amino-acid sequence, 21 residues long: Ocellatin-4 (21 aa).

Isoleucine amide is present on I21.

In terms of tissue distribution, expressed by the skin dorsal glands.

It is found in the secreted. In terms of biological role, has hemolytic activity against human erythrocytes (HC50=14.3 uM). Has antibacterial activity against the Gram-positive bacterium S.aureus ATCC 25923 (MIC=64 uM) and the Gram-negative bacterium E.coli ATCC 25922 (MIC=64 uM). This chain is Ocellatin-4, found in Leptodactylus ocellatus (Argus frog).